We begin with the raw amino-acid sequence, 556 residues long: Formate--tetrahydrofolate ligase (556 aa).

An ATP-binding site is contributed by 65–72 (TPAGEGKT).

It belongs to the formate--tetrahydrofolate ligase family.

It carries out the reaction (6S)-5,6,7,8-tetrahydrofolate + formate + ATP = (6R)-10-formyltetrahydrofolate + ADP + phosphate. Its pathway is one-carbon metabolism; tetrahydrofolate interconversion. This chain is Formate--tetrahydrofolate ligase, found in Hyphomonas neptunium (strain ATCC 15444).